Here is an 83-residue protein sequence, read N- to C-terminus: Major outer membrane lipoprotein (83 aa).

An N-terminal signal peptide occupies residues 1 to 19; it reads MNNVLKFSALALAAVLATG. C20 is lipidated: N-palmitoyl cysteine. A lipid anchor (S-diacylglycerol cysteine) is attached at C20.

It is found in the cell outer membrane. This is Major outer membrane lipoprotein (oprI) from Pseudomonas aeruginosa (strain ATCC 15692 / DSM 22644 / CIP 104116 / JCM 14847 / LMG 12228 / 1C / PRS 101 / PAO1).